Here is a 170-residue protein sequence, read N- to C-terminus: Adenine phosphoribosyltransferase (170 aa).

Belongs to the purine/pyrimidine phosphoribosyltransferase family. In terms of assembly, homodimer.

The protein localises to the cytoplasm. It catalyses the reaction AMP + diphosphate = 5-phospho-alpha-D-ribose 1-diphosphate + adenine. The protein operates within purine metabolism; AMP biosynthesis via salvage pathway; AMP from adenine: step 1/1. Catalyzes a salvage reaction resulting in the formation of AMP, that is energically less costly than de novo synthesis. The sequence is that of Adenine phosphoribosyltransferase from Mesoplasma florum (strain ATCC 33453 / NBRC 100688 / NCTC 11704 / L1) (Acholeplasma florum).